Here is an 81-residue protein sequence, read N- to C-terminus: N.vectensis toxin 4 (81 aa).

The N-terminal stretch at 1–20 (MRSSWMFVICFAMLILYTNG) is a signal peptide. 3 disulfide bridges follow: Cys-46-Cys-75, Cys-48-Cys-70, and Cys-63-Cys-76.

Expressed in ectodermal gland cells. In adult female tissues, highly transcribed in mesenteries (gametes-producing tissue) and slightly transcribed in tentacles, pharynx and physa.

Has toxic effects on zebrafish larvae. It causes contractile paralysis and twitching of the tail within 30 minutes, followed by death within 40 minutes. Does not show any toxicity when injected into arthropods (cherry shrimps or grass shrimps). The chain is N.vectensis toxin 4 from Nematostella vectensis (Starlet sea anemone).